The primary structure comprises 219 residues: Deoxyribose-phosphate aldolase (219 aa).

The active-site Proton donor/acceptor is the aspartate 88. Lysine 150 (schiff-base intermediate with acetaldehyde) is an active-site residue. Catalysis depends on lysine 179, which acts as the Proton donor/acceptor.

It belongs to the DeoC/FbaB aldolase family. DeoC type 1 subfamily.

The protein resides in the cytoplasm. It catalyses the reaction 2-deoxy-D-ribose 5-phosphate = D-glyceraldehyde 3-phosphate + acetaldehyde. Its pathway is carbohydrate degradation; 2-deoxy-D-ribose 1-phosphate degradation; D-glyceraldehyde 3-phosphate and acetaldehyde from 2-deoxy-alpha-D-ribose 1-phosphate: step 2/2. Its function is as follows. Catalyzes a reversible aldol reaction between acetaldehyde and D-glyceraldehyde 3-phosphate to generate 2-deoxy-D-ribose 5-phosphate. In Aquifex aeolicus (strain VF5), this protein is Deoxyribose-phosphate aldolase.